Consider the following 138-residue polypeptide: Large ribosomal subunit protein uL16 (138 aa).

It belongs to the universal ribosomal protein uL16 family. As to quaternary structure, part of the 50S ribosomal subunit.

Its function is as follows. Binds 23S rRNA and is also seen to make contacts with the A and possibly P site tRNAs. The protein is Large ribosomal subunit protein uL16 of Acidiphilium cryptum (strain JF-5).